We begin with the raw amino-acid sequence, 360 residues long: DNA replication and repair protein RecF (360 aa).

Glycine 30–threonine 37 is an ATP binding site.

This sequence belongs to the RecF family.

The protein resides in the cytoplasm. In terms of biological role, the RecF protein is involved in DNA metabolism; it is required for DNA replication and normal SOS inducibility. RecF binds preferentially to single-stranded, linear DNA. It also seems to bind ATP. In Shewanella putrefaciens (strain CN-32 / ATCC BAA-453), this protein is DNA replication and repair protein RecF.